Here is a 486-residue protein sequence, read N- to C-terminus: Malonate-semialdehyde dehydrogenase 1 (486 aa).

5 residues coordinate NAD(+): phenylalanine 154, lysine 178, glutamate 181, arginine 182, and serine 231. The Nucleophile role is filled by cysteine 286. Glutamate 386 is an NAD(+) binding site.

Belongs to the aldehyde dehydrogenase family. IolA subfamily. As to quaternary structure, homotetramer.

The catalysed reaction is 3-oxopropanoate + NAD(+) + CoA + H2O = hydrogencarbonate + acetyl-CoA + NADH + H(+). The enzyme catalyses 2-methyl-3-oxopropanoate + NAD(+) + CoA + H2O = propanoyl-CoA + hydrogencarbonate + NADH + H(+). It participates in polyol metabolism; myo-inositol degradation into acetyl-CoA; acetyl-CoA from myo-inositol: step 7/7. Catalyzes the oxidation of malonate semialdehyde (MSA) and methylmalonate semialdehyde (MMSA) into acetyl-CoA and propanoyl-CoA, respectively. Is involved in a myo-inositol catabolic pathway. Bicarbonate, and not CO2, is the end-product of the enzymatic reaction. The sequence is that of Malonate-semialdehyde dehydrogenase 1 from Bacillus anthracis.